The chain runs to 168 residues: MHELTLQQVNRLDDDSFVDAFGEIYEHSPWVAERARSSRPFSSVDELRSAMKRAVEDASREKQLQLLRAHPDLGERTEMTDASEAEQASAELDSLSRSQYETFQRLNETYRERFGFPFVMAVKDENPDAIAAAMERRVDHSESTEFRTALDEVHTIAELRLAERFSSE.

H70 (proton donor; for OHCU decarboxylase activity) is an active-site residue. The segment covering 70-79 (HPDLGERTEM) has biased composition (basic and acidic residues). The tract at residues 70 to 93 (HPDLGERTEMTDASEAEQASAELD) is disordered. Residues P71, 83 to 87 (SEAEQ), and 118 to 122 (FVMAV) each bind substrate.

The protein belongs to the OHCU decarboxylase family.

The enzyme catalyses 5-hydroxy-2-oxo-4-ureido-2,5-dihydro-1H-imidazole-5-carboxylate + H(+) = (S)-allantoin + CO2. It participates in purine metabolism; urate degradation; (S)-allantoin from urate: step 3/3. Catalyzes the stereoselective decarboxylation of 2-oxo-4-hydroxy-4-carboxy-5-ureidoimidazoline (OHCU) to (S)-allantoin. The polypeptide is 2-oxo-4-hydroxy-4-carboxy-5-ureidoimidazoline decarboxylase (Haloferax volcanii (strain ATCC 29605 / DSM 3757 / JCM 8879 / NBRC 14742 / NCIMB 2012 / VKM B-1768 / DS2) (Halobacterium volcanii)).